Here is a 450-residue protein sequence, read N- to C-terminus: FERM domain-containing protein 8 (450 aa).

The 346-residue stretch at 28–373 (MDVIVYLIND…YCIELSQTTE (346 aa)) folds into the FERM domain.

Its subcellular location is the cytoplasm. The protein resides in the cytosol. It is found in the cell membrane. Functionally, promotes the cell surface stability of RHBDF1 and RHBDF2 and prevents their degradation via the endolysosomal pathway. By acting on RHBDF proteins, involved in ADAM17-mediated ligand shedding. May negatively regulate Wnt signaling. The sequence is that of FERM domain-containing protein 8 (frmd8) from Xenopus tropicalis (Western clawed frog).